We begin with the raw amino-acid sequence, 310 residues long: Protoheme IX farnesyltransferase (310 aa).

A run of 9 helical transmembrane segments spans residues valine 31–histidine 51, proline 52–methionine 72, alanine 102–leucine 119, isoleucine 123–lysine 145, asparagine 151–serine 171, isoleucine 179–phenylalanine 199, isoleucine 225–asparagine 245, isoleucine 248–phenylalanine 268, and phenylalanine 281–isoleucine 301.

The protein belongs to the UbiA prenyltransferase family. Protoheme IX farnesyltransferase subfamily.

The protein localises to the cell inner membrane. The enzyme catalyses heme b + (2E,6E)-farnesyl diphosphate + H2O = Fe(II)-heme o + diphosphate. The protein operates within porphyrin-containing compound metabolism; heme O biosynthesis; heme O from protoheme: step 1/1. In terms of biological role, converts heme B (protoheme IX) to heme O by substitution of the vinyl group on carbon 2 of heme B porphyrin ring with a hydroxyethyl farnesyl side group. In Rickettsia prowazekii (strain Madrid E), this protein is Protoheme IX farnesyltransferase.